The following is a 339-amino-acid chain: Holliday junction branch migration complex subunit RuvB (339 aa).

A disordered region spans residues 1–22 (MIDADPTLRPEPLPEDNDRALR). The large ATPase domain (RuvB-L) stretch occupies residues 1-182 (MIDADPTLRP…FGIPTRLQFY (182 aa)). ATP contacts are provided by residues leucine 21, arginine 22, glycine 63, lysine 66, threonine 67, threonine 68, 129–131 (EDF), arginine 172, tyrosine 182, and arginine 219. A Mg(2+)-binding site is contributed by threonine 67. Positions 183 to 253 (TIDELFEIVS…LADGALTRLG (71 aa)) are small ATPAse domain (RuvB-S). Residues 256-339 (QLGLDGADRR…PPKSQSDLFG (84 aa)) form a head domain (RuvB-H) region. The DNA site is built by arginine 292, arginine 311, and arginine 316.

Belongs to the RuvB family. As to quaternary structure, homohexamer. Forms an RuvA(8)-RuvB(12)-Holliday junction (HJ) complex. HJ DNA is sandwiched between 2 RuvA tetramers; dsDNA enters through RuvA and exits via RuvB. An RuvB hexamer assembles on each DNA strand where it exits the tetramer. Each RuvB hexamer is contacted by two RuvA subunits (via domain III) on 2 adjacent RuvB subunits; this complex drives branch migration. In the full resolvosome a probable DNA-RuvA(4)-RuvB(12)-RuvC(2) complex forms which resolves the HJ.

Its subcellular location is the cytoplasm. The enzyme catalyses ATP + H2O = ADP + phosphate + H(+). The RuvA-RuvB-RuvC complex processes Holliday junction (HJ) DNA during genetic recombination and DNA repair, while the RuvA-RuvB complex plays an important role in the rescue of blocked DNA replication forks via replication fork reversal (RFR). RuvA specifically binds to HJ cruciform DNA, conferring on it an open structure. The RuvB hexamer acts as an ATP-dependent pump, pulling dsDNA into and through the RuvAB complex. RuvB forms 2 homohexamers on either side of HJ DNA bound by 1 or 2 RuvA tetramers; 4 subunits per hexamer contact DNA at a time. Coordinated motions by a converter formed by DNA-disengaged RuvB subunits stimulates ATP hydrolysis and nucleotide exchange. Immobilization of the converter enables RuvB to convert the ATP-contained energy into a lever motion, pulling 2 nucleotides of DNA out of the RuvA tetramer per ATP hydrolyzed, thus driving DNA branch migration. The RuvB motors rotate together with the DNA substrate, which together with the progressing nucleotide cycle form the mechanistic basis for DNA recombination by continuous HJ branch migration. Branch migration allows RuvC to scan DNA until it finds its consensus sequence, where it cleaves and resolves cruciform DNA. This Ruegeria sp. (strain TM1040) (Silicibacter sp.) protein is Holliday junction branch migration complex subunit RuvB.